A 391-amino-acid polypeptide reads, in one-letter code: uncharacterized protein (391 aa).

The Flavodoxin-like domain maps to 247 to 387; it reads AVIVYATIYS…KIKEFGRKLA (141 aa).

This is an uncharacterized protein from Methanocaldococcus jannaschii (strain ATCC 43067 / DSM 2661 / JAL-1 / JCM 10045 / NBRC 100440) (Methanococcus jannaschii).